The chain runs to 515 residues: MDEFHRYGKEDSSWQQCFLYPLFFQEDLYAISHDHYLDGSSSSEPMEHLSSNDQFSFLTVKRLIGQIRQQNHSIVLFVNCDPNPLVDRKKSSYSESVLEGLTLVLEVPFSIRSKYSVEGMNEWKSFRSIHSIFPFLEDKFPHSNYVSDTRIPYSIHPEILVRTFRRWIGDAPSLHPLRSILYEYRNSSESLQRSIIVVPKVNTRFFLFLWNNYVYECESILVSLLKRSSHSRSLSHGSFPQRTHFHRKIKNIFLFSRRNSFQSIWSLKDPNIHYVRYGERSIIAIKGTHLLVKKYRYYLPIFRQCYFHLWNEPYRVCSHQLSKNCSSSLGYFLRVRMKPLLVKTKMLDELFIADLITDEFDPIVPIVPIIGLLSREKFCDISGRPISKLSWTSLTDDDILDRFDRIWRNLFHYYSGSFGRDGLYRIKYILSLSCAKTLACKHKSTIRVVRKELGPELFKKSFSKERELDSPPFSSKAAARSQRERIWHSDIPQINPLAHSWQKIQDLKIENLFDQ.

The protein belongs to the intron maturase 2 family. MatK subfamily.

The protein resides in the plastid. It is found in the chloroplast. Its function is as follows. Usually encoded in the trnK tRNA gene intron. Probably assists in splicing its own and other chloroplast group II introns. The polypeptide is Maturase K (Picea pungens (Colorado spruce)).